A 648-amino-acid polypeptide reads, in one-letter code: Transcription termination factor FttA (648 aa).

The segment at 1–179 is not required for dimerization, required for cleavage at some sites; it reads MIKRETQVDQ…QVGRNIYRKP (179 aa). The tract at residues 9 to 76 is KHa; that stretch reads DQILKDIRGI…ISIRPDPDVL (68 aa). The segment at 77–144 is KHb; the sequence is LPPEEAEKLI…WAPKVVRTPP (68 aa). The segment at 185-395 is metallo-beta-lactamase N-terminus; it reads WIRITGLGGF…LVMESTYGGA (211 aa). 6 residues coordinate Zn(2+): histidine 253, histidine 255, aspartate 257, histidine 258, histidine 341, and aspartate 364. The segment at 396–589 is beta-Casp; the sequence is NDIQMPREEA…MEVHTIDGFS (194 aa). Residues 590–648 form a metallo-beta-lactamase C-terminus region; that stretch reads GHADRRELMNYVAKVRPRPERVITVHGEPQKCLDLATSIHRKFGLSTRAPNNLDTIRLR. A Zn(2+)-binding site is contributed by histidine 615.

This sequence belongs to the metallo-beta-lactamase superfamily. RNA-metabolizing metallo-beta-lactamase-like family. FttA subfamily. In terms of assembly, homodimer. Interacts with RNA polymerase (RNAP), interacts with the Spt4-Spt5 complex. It depends on Zn(2+) as a cofactor.

With respect to regulation, endoRNase activity is inhibited by 1,10-phenanthroline. Terminates transcription on the whole genome. Termination is linked to FttA-mediated RNA cleavage and does not require NTP hydrolysis. Cleaves endonucleolytically at the RNA exit channel of RNA polymerase (RNAP); the 5'-3' exonuclease activity of this protein degrades the nascent RNA released from RNAP. In terms of biological role, a single-stranded endoribonuclease (endoRNase) with a preference for cleavage at CA dinucleotides. Has 5'-3' exoribonuclease (exoRNase) activity on 5'-monophosphorylated RNA; this activity does not occur on 5'-tri-phosphorylated or 5'-OH substrates. Also has weak activity 5'-3' exodeoxyribonuclease activity on ssDNA. The protein is Transcription termination factor FttA of Pyrococcus abyssi (strain GE5 / Orsay).